The following is a 333-amino-acid chain: DNA-directed RNA polymerase subunit alpha (333 aa).

The alpha N-terminal domain (alpha-NTD) stretch occupies residues 1–246 (MEKFIKINWT…AHLNIIGDVN (246 aa)). The alpha C-terminal domain (alpha-CTD) stretch occupies residues 263–333 (HSKTQNILIQ…YNVFLDKGEE (71 aa)).

Belongs to the RNA polymerase alpha chain family. Homodimer. The RNAP catalytic core consists of 2 alpha, 1 beta, 1 beta' and 1 omega subunit. When a sigma factor is associated with the core the holoenzyme is formed, which can initiate transcription.

It catalyses the reaction RNA(n) + a ribonucleoside 5'-triphosphate = RNA(n+1) + diphosphate. In terms of biological role, DNA-dependent RNA polymerase catalyzes the transcription of DNA into RNA using the four ribonucleoside triphosphates as substrates. This is DNA-directed RNA polymerase subunit alpha from Mycoplasma mobile (strain ATCC 43663 / 163K / NCTC 11711) (Mesomycoplasma mobile).